A 122-amino-acid chain; its full sequence is Large ribosomal subunit protein uL22 (122 aa).

The tract at residues Val102–Lys122 is disordered.

The protein belongs to the universal ribosomal protein uL22 family. As to quaternary structure, part of the 50S ribosomal subunit.

This protein binds specifically to 23S rRNA; its binding is stimulated by other ribosomal proteins, e.g. L4, L17, and L20. It is important during the early stages of 50S assembly. It makes multiple contacts with different domains of the 23S rRNA in the assembled 50S subunit and ribosome. Its function is as follows. The globular domain of the protein is located near the polypeptide exit tunnel on the outside of the subunit, while an extended beta-hairpin is found that lines the wall of the exit tunnel in the center of the 70S ribosome. This chain is Large ribosomal subunit protein uL22, found in Helicobacter pylori (strain HPAG1).